Here is a 224-residue protein sequence, read N- to C-terminus: uncharacterized protein (224 aa).

The 4Fe-4S domain maps to 9 to 68 (SKMVDVNEITKYLPGFNCGACGYKRCDLFAEALLNKDVKLEDCPFLLRERFKENYEKLKE). [4Fe-4S] cluster contacts are provided by cysteine 26, cysteine 29, cysteine 34, and cysteine 51.

[4Fe-4S] cluster serves as cofactor.

This is an uncharacterized protein from Methanocaldococcus jannaschii (strain ATCC 43067 / DSM 2661 / JAL-1 / JCM 10045 / NBRC 100440) (Methanococcus jannaschii).